A 1108-amino-acid chain; its full sequence is MQFDEKKEMFTIPEFGQIQLEGFCRFIEYDLLDKFVKFPKIANTQKEVEFLFDKNYKIIEPSIKEKDAVYQRLTFSSKLFVPAFFIYWNKIKKKKIIYLGEIPLMNNNGTFLINGNYRVVVNQLIRSPGIYYSLERKRTGNIYTSTLISDCGGRLKFEIDIKQNIWIRISRKKNVSILVFFFAMGLDIEEILKNTYYIKGFEGWGLICNEKLKHKLSRKKGAIFTFYEELGSRGDNNDFVFSESLSESLYKKFTNFLSKRCKLGRIGRRNLNKKLNLEIPDNEIFLLPQDVLAIIDYLIKVSYGVGTVDNIDHLQNRRFFSVADLLKKEVGLALNRVKVLIQKTMQTIEMLRKKQNKRIMLPEIPLVSTQITKTLKHFFGLHPLSQFLEQTNSLAEILHARKVSFLGPGGLTERTANFRARDIHPSYYGRFCPINTPEGQNAGLIASLAISARINFGFLESPFYNVAKKYQKAKKIVYLSPSEDVYYRIALGNCLSVDQKIPEKKNTPTQYHQEFLSIAWEQIHFRCFLPLQYFSIGVSLIPFLEHNDATRALMGSNMQRQAVPSVQPEKCIVGTGLEGQVALDSGALAISTQEGRIQYSDAATIVSVLKGNTTQTELQIYQRSNSNTLMHQKTHASQAKYVRKGQILADGAAMLGGEICLGKNILVAYMPWQGYNFEDAILISECLIYKDIFTSFHITRYETTICTAECEKMTREIPRLATYSLRHLDKNGLVRVGSWVQPGDVLVGKLRPRSSEDFSRFPELRLLQDLFCTSPIKETCLRANGKGRVIDVNWSKLQAFCKDDLEKGHQDDDTEDIYDEAEDALEKVYQLNNYNLSSDSEKVHVYLLEKRKIQVGDKVAGRHGNKGIVSIVLSRQDMPFLQSGISLDMVLNPLSVPSRMNVGQIFECLLGLAGTMNKHYRIPPFDERYEQEASRKLVFYELYKASEQTANPWIFELEHLGKTQIFDGRTGEIFEQPVTTGNAYILKLIHQVNDKMHARSTGNYARITQQPVQGKSKGGGQRLGEMEVWALESFGVAYVLREMLTVKADHIRARKKILRSILDGHSVPKADSATESFRVLSKELNSLALELNHTIISGKYFNLDRIEV.

The protein belongs to the RNA polymerase beta chain family. As to quaternary structure, in plastids the minimal PEP RNA polymerase catalytic core is composed of four subunits: alpha, beta, beta', and beta''. When a (nuclear-encoded) sigma factor is associated with the core the holoenzyme is formed, which can initiate transcription.

It localises to the plastid. The protein localises to the chloroplast. The catalysed reaction is RNA(n) + a ribonucleoside 5'-triphosphate = RNA(n+1) + diphosphate. In terms of biological role, DNA-dependent RNA polymerase catalyzes the transcription of DNA into RNA using the four ribonucleoside triphosphates as substrates. The sequence is that of DNA-directed RNA polymerase subunit beta from Gnetum parvifolium (Small-leaved jointfir).